A 208-amino-acid polypeptide reads, in one-letter code: Protein GrpE (208 aa).

Residues 1 to 25 are compositionally biased toward basic and acidic residues; that stretch reads MVDNKDFNEELKESIQEELDNETKS. Positions 1–38 are disordered; sequence MVDNKDFNEELKESIQEELDNETKSENPNIDEEVEEVS. Residues 29–38 are compositionally biased toward acidic residues; it reads NIDEEVEEVS.

It belongs to the GrpE family. In terms of assembly, homodimer.

The protein localises to the cytoplasm. In terms of biological role, participates actively in the response to hyperosmotic and heat shock by preventing the aggregation of stress-denatured proteins, in association with DnaK and GrpE. It is the nucleotide exchange factor for DnaK and may function as a thermosensor. Unfolded proteins bind initially to DnaJ; upon interaction with the DnaJ-bound protein, DnaK hydrolyzes its bound ATP, resulting in the formation of a stable complex. GrpE releases ADP from DnaK; ATP binding to DnaK triggers the release of the substrate protein, thus completing the reaction cycle. Several rounds of ATP-dependent interactions between DnaJ, DnaK and GrpE are required for fully efficient folding. The chain is Protein GrpE from Clostridium perfringens (strain SM101 / Type A).